We begin with the raw amino-acid sequence, 357 residues long: tRNA-specific 2-thiouridylase MnmA (357 aa).

ATP is bound by residues 10–17 (GISGGVDS) and Ile36. Cys98 functions as the Nucleophile in the catalytic mechanism. A disulfide bond links Cys98 and Cys194. Gly122 contacts ATP. Positions 144–146 (KDQ) are interaction with tRNA. Catalysis depends on Cys194, which acts as the Cysteine persulfide intermediate. The tract at residues 303–304 (RY) is interaction with tRNA.

This sequence belongs to the MnmA/TRMU family.

The protein resides in the cytoplasm. The catalysed reaction is S-sulfanyl-L-cysteinyl-[protein] + uridine(34) in tRNA + AH2 + ATP = 2-thiouridine(34) in tRNA + L-cysteinyl-[protein] + A + AMP + diphosphate + H(+). In terms of biological role, catalyzes the 2-thiolation of uridine at the wobble position (U34) of tRNA, leading to the formation of s(2)U34. This Chlorobium phaeovibrioides (strain DSM 265 / 1930) (Prosthecochloris vibrioformis (strain DSM 265)) protein is tRNA-specific 2-thiouridylase MnmA.